The sequence spans 140 residues: Large ribosomal subunit protein bL17 (140 aa).

Belongs to the bacterial ribosomal protein bL17 family. In terms of assembly, part of the 50S ribosomal subunit. Contacts protein L32.

This is Large ribosomal subunit protein bL17 from Paramagnetospirillum magneticum (strain ATCC 700264 / AMB-1) (Magnetospirillum magneticum).